A 999-amino-acid polypeptide reads, in one-letter code: Testis anion transporter 1 (999 aa).

Topologically, residues 1–93 (MQTERSLQSF…YRFKDWLLGD (93 aa)) are cytoplasmic. A helical membrane pass occupies residues 94-114 (LLAGLSVGLVQVPQGLILSLL). Over 115 to 117 (TRQ) the chain is Extracellular. The helical transmembrane segment at 118-138 (LIPPLNVTYAAFCSSVIYVIF) threads the bilayer. A topological domain (cytoplasmic) is located at residue Gly-139. A helical transmembrane segment spans residues 140–160 (SCHQMSIGPFFLVSALMINVL). Over 161–200 (KDRPFNNGHLILGTFVKDDFSVPTFYLSYNRSLSMVASTT) the chain is Extracellular. N-linked (GlcNAc...) asparagine glycosylation occurs at Asn-190. Residues 201–221 (FLTGIIQLSMGMLGMGFMATY) traverse the membrane as a helical segment. The Cytoplasmic portion of the chain corresponds to 222–230 (LPEAATSAY). Residues 231 to 251 (LAAVALHIILAQMTCILGIMV) form a helical membrane-spanning segment. Residues 252 to 268 (SFHAGPISFIYNIINYC) lie on the Extracellular side of the membrane. Residues 269–289 (IALPKANSTSILLFITSVVAL) traverse the membrane as a helical segment. Over 290-305 (RINKCIRITFNRYPIE) the chain is Cytoplasmic. Residues 306 to 326 (FPMELLLILGFSLLTSKITMA) traverse the membrane as a helical segment. Residues 327–354 (TENSKMLMNMIPYSFVFPENPEFGILSR) lie on the Extracellular side of the membrane. A helical membrane pass occupies residues 355 to 375 (VVLQALSLSFVSSFLLISLGK). At 376–390 (KIANFHNYRTNSNQD) the chain is on the cytoplasmic side. Residues 391–411 (LIAIGLCNLLSSFFKCCVFTG) form a helical membrane-spanning segment. Residues 412–427 (SLSRTTIQDKSGGRQQ) lie on the Extracellular side of the membrane. Residues 428–448 (FASLVGAGVMLLLMVKMESFF) form a helical membrane-spanning segment. Over 449–453 (HNLPN) the chain is Cytoplasmic. A helical membrane pass occupies residues 454–474 (AVLAGIILSNVVPYLEAIYNL). Over 475–494 (PSLWRQDQYECIIWMVTFSS) the chain is Extracellular. The chain crosses the membrane as a helical span at residues 495–515 (AILLGLDVGLLISLAFTFFVI). Topologically, residues 516-544 (TIRSHRTKILVLGQIPNTNIYRNVNDYRE) are cytoplasmic. Residues 541–796 (DYREVILIPG…LSLHDAVLFA (256 aa)) form the STAS domain. The helical transmembrane segment at 545-565 (VILIPGVKIFQCCSSITFVNV) threads the bilayer. Residues 566–999 (YHLKQKVLKE…RKPHNYPNSP (434 aa)) lie on the Extracellular side of the membrane. The interaction with RACGAP1 stretch occupies residues 661–999 (TVSSTSQRNI…RKPHNYPNSP (339 aa)). Disordered stretches follow at residues 678-701 (EKAW…SESL) and 893-999 (SELD…PNSP). A compositionally biased stretch (pro residues) spans 684 to 696 (NSPPRNSPLPPPE). Composition is skewed to acidic residues over residues 893 to 903 (SELDPGSELDS) and 912 to 947 (ELES…EPEP). Residues 973–982 (GSSNSQSRAP) are compositionally biased toward polar residues.

This sequence belongs to the SLC26A/SulP transporter (TC 2.A.53) family. As to quaternary structure, interacts with RACGAP1. Interacts with CFTR; stimulates anion transport activity of CFTR. In terms of processing, N-glycosylated. In terms of tissue distribution, expressed in testis and epididymis. Located at the end of the midpiece of the flagella, known as the annulus, in spermatozoa.

The protein resides in the membrane. It carries out the reaction sulfate(out) + chloride(in) = sulfate(in) + chloride(out). It catalyses the reaction oxalate(in) + chloride(out) = oxalate(out) + chloride(in). In terms of biological role, antiporter that mediates the exchange of sulfate and oxalate against chloride ions across a membrane. Stimulates anion transport activity of CFTR. May cooperate with CFTR in the regulation of chloride and bicarbonate ions fluxes required for activation of the ADCY10/PKA pathway during sperm motility and sperm capacitation. May play a role in sperm tail differentiation and motility and hence male fertility. In Mus musculus (Mouse), this protein is Testis anion transporter 1.